The following is a 1521-amino-acid chain: Retroelement silencing factor 1 (1521 aa).

Lys-223 participates in a covalent cross-link: Glycyl lysine isopeptide (Lys-Gly) (interchain with G-Cter in SUMO2). A disordered region spans residues 621-640; the sequence is EKQHKPIQGDPDIADSSLGK. Phosphoserine is present on Ser-910. Thr-996 is subject to Phosphothreonine. Composition is skewed to polar residues over residues 1093-1105 and 1124-1142; these read KNMP…SQES and LSSN…QSVS. Disordered regions lie at residues 1093–1147, 1204–1230, and 1312–1335; these read KNMP…EKKK, ERAS…KSTR, and EASR…PDKM. Ser-1142 is subject to Phosphoserine. The span at 1214–1228 shows a compositional bias: low complexity; sequence PSPESSDPKGSSSKS. Basic and acidic residues predominate over residues 1325–1335; sequence GKFDGKQPDKM. Lys-1411 participates in a covalent cross-link: Glycyl lysine isopeptide (Lys-Gly) (interchain with G-Cter in SUMO2). Disordered stretches follow at residues 1425-1444 and 1457-1485; these read DKQD…VQVS and IPTR…SADE. The segment covering 1467-1476 has biased composition (basic and acidic residues); the sequence is SQRDSADSRL. Phosphoserine occurs at positions 1482 and 1514.

In terms of assembly, interacts with SETDB1.

Its subcellular location is the nucleus. Plays a role in the regulation of imprinted gene expression, regulates repressive epigenetic modifications associated with SETDB1. Required for the recruitment or accumulation of SETDB1 to the endogenous retroviruses (ERVs) and maintenance of repressive chromatin configuration, contributing to a subset of the SETDB1-dependent ERV silencing in embryonic stem cells. In Mus musculus (Mouse), this protein is Retroelement silencing factor 1.